The sequence spans 366 residues: Prostaglandin F2-alpha receptor (366 aa).

The Extracellular portion of the chain corresponds to 1-31; sequence MSINSSKQPASSAAGLIANTTCQTENRLSVF. N-linked (GlcNAc...) asparagine glycans are attached at residues Asn4 and Asn19. The chain crosses the membrane as a helical span at residues 32-55; the sequence is FSIIFMTVGIVSNSLAIAILMKAY. The Cytoplasmic segment spans residues 56-69; it reads QRFRRKSKASFLLL. The helical transmembrane segment at 70–90 threads the bilayer; sequence ASGLVITDFFGHLINGGIAVF. At 91–109 the chain is on the extracellular side; the sequence is VYASDKDWIRFDQSNILCS. Cys108 and Cys186 are disulfide-bonded. The helical transmembrane segment at 110–131 threads the bilayer; sequence VFGISMVFSGLCPLFLGSTMAI. The Cytoplasmic portion of the chain corresponds to 132–152; sequence ERCIGVTNPLFHSTKITSKHV. The chain crosses the membrane as a helical span at residues 153–175; that stretch reads KMILSGVCMFAVFVALLPILGHR. At 176–198 the chain is on the extracellular side; the sequence is DYQIQASRTWCFYNTEHIEDWED. Residues 199–224 traverse the membrane as a helical segment; it reads RFYLLFFSSLGLLALGISFSCNAVTG. Residues 225–250 lie on the Cytoplasmic side of the membrane; it reads VTLLRVKFRSQQHRQGRSHHLEMVIQ. A helical membrane pass occupies residues 251–267; that stretch reads LLAIMCVSCVCWSPFLV. Residues 268–285 are Extracellular-facing; that stretch reads TMANIAINGNNSPVTCET. The chain crosses the membrane as a helical span at residues 286 to 307; it reads TLFALRMATWNQILDPWVYILL. Over 308–366 the chain is Cytoplasmic; it reads RKAVLRNLYKLASRCCGVNIISLHIWELSSIKNSLKVAAISESPAAEKENQQASSEAGL.

Belongs to the G-protein coupled receptor 1 family. As to expression, highest expression in pregnant ovary. Also found in a low extent in the kidney. In the brain, expressed in astrocytes and oligodendrocytes, and meningeal fibroblasts, but not in migroglia cells.

The protein localises to the cell membrane. In terms of biological role, receptor for prostaglandin F2-alpha (PGF2-alpha). The activity of this receptor is mediated by G proteins which activate a phosphatidylinositol-calcium second messenger system. Initiates luteolysis in the corpus luteum. This chain is Prostaglandin F2-alpha receptor (Ptgfr), found in Rattus norvegicus (Rat).